The following is a 114-amino-acid chain: Tyrosine-protein phosphatase 27 (114 aa).

The region spanning 1–114 is the Tyrosine-protein phosphatase domain; the sequence is WQMIVEHKCC…ELGNDNPIVV (114 aa). Aspartate 82 contacts substrate.

Belongs to the protein-tyrosine phosphatase family.

It carries out the reaction O-phospho-L-tyrosyl-[protein] + H2O = L-tyrosyl-[protein] + phosphate. The protein is Tyrosine-protein phosphatase 27 (STY-27) of Styela plicata (Wrinkled sea squirt).